A 136-amino-acid polypeptide reads, in one-letter code: Peptide methionine sulfoxide reductase MsrB (136 aa).

Residues 9–136 (DAEWKALLAE…NSASLDFKKK (128 aa)) enclose the MsrB domain. 4 residues coordinate Zn(2+): cysteine 53, cysteine 56, cysteine 102, and cysteine 105. Cysteine 125 acts as the Nucleophile in catalysis.

The protein belongs to the MsrB Met sulfoxide reductase family. The cofactor is Zn(2+).

The enzyme catalyses L-methionyl-[protein] + [thioredoxin]-disulfide + H2O = L-methionyl-(R)-S-oxide-[protein] + [thioredoxin]-dithiol. The protein is Peptide methionine sulfoxide reductase MsrB of Variovorax paradoxus (strain S110).